The chain runs to 248 residues: Exosome complex component Rrp41 (248 aa).

This sequence belongs to the RNase PH family. Rrp41 subfamily. Component of the archaeal exosome complex. Forms a hexameric ring-like arrangement composed of 3 Rrp41-Rrp42 heterodimers. The hexameric ring associates with a trimer of Rrp4 and/or Csl4 subunits.

The protein resides in the cytoplasm. In terms of biological role, catalytic component of the exosome, which is a complex involved in RNA degradation. Has 3'-&gt;5' exoribonuclease activity. Can also synthesize heteromeric RNA-tails. Binds RNA. The sequence is that of Exosome complex component Rrp41 from Saccharolobus solfataricus (strain ATCC 35092 / DSM 1617 / JCM 11322 / P2) (Sulfolobus solfataricus).